Here is a 155-residue protein sequence, read N- to C-terminus: Phospholipase A2 A2-actitoxin-Ucs2a (155 aa).

The N-terminal stretch at 1–19 (MKNNIILVILLGISVFVDC) is a signal peptide. Positions 20–42 (LPLNDQEEDKSLNAQESEVSAVQ) are excised as a propeptide. Cystine bridges form between Cys-55–Cys-118, Cys-71–Cys-87, Cys-86–Cys-143, Cys-93–Cys-136, Cys-100–Cys-129, and Cys-122–Cys-134. Positions 72 and 74 each coordinate Ca(2+). His-90 is a catalytic residue. Residue Asp-91 participates in Ca(2+) binding. Residue Asp-137 is part of the active site.

It belongs to the phospholipase A2 family. Ca(2+) serves as cofactor.

The protein localises to the secreted. It is found in the nematocyst. The enzyme catalyses a 1,2-diacyl-sn-glycero-3-phosphocholine + H2O = a 1-acyl-sn-glycero-3-phosphocholine + a fatty acid + H(+). Its function is as follows. PLA2 catalyzes the calcium-dependent hydrolysis of the 2-acyl groups in 3-sn-phosphoglycerides. The sequence is that of Phospholipase A2 A2-actitoxin-Ucs2a from Urticina crassicornis (Mottled anemone).